We begin with the raw amino-acid sequence, 405 residues long: MTKFRSSIAVKKGMCTLFLLFIYVLGSRIALPFVDLNSRNFLGGSAAYLDFSVALTGGNLRSLSLFSIGLSPWMSAMILWQMFSFSKKLGLNSVSSEVQDRRKMYLTLGIALIQALALTTNLPVQAPYNPFLVFLLNTSLLVAGTFFLVWLSDINATIGVGGPVVILLASMVASLPQDIIQSIQVHKISLGLLFLLLVLGVLFTYLVVLFYRARYRIPINKIGLHSRFKRYSYLEIMLNPAGGMPYMYVMSLMGLPSYLLLLLQHLDKGNPLYSAMLEQYAMGKPLWIYAYILILFVFSIAFAFVNVSGQQIADQMKQSGDYIYGVYPGEDTSRFINRLVLRFALIGAVFNVTLAGVPILFVLQDESLLKVSMIPGLFLILSGMLFTIHDELQALRLNERYQPLF.

10 helical membrane passes run 14–34 (MCTLFLLFIYVLGSRIALPFV), 65–85 (LFSIGLSPWMSAMILWQMFSF), 104–124 (MYLTLGIALIQALALTTNLPV), 131–151 (FLVFLLNTSLLVAGTFFLVWL), 156–176 (ATIGVGGPVVILLASMVASLP), 190–210 (LGLLFLLLVLGVLFTYLVVLF), 243–263 (GMPYMYVMSLMGLPSYLLLLL), 285–305 (PLWIYAYILILFVFSIAFAFV), 343–363 (FALIGAVFNVTLAGVPILFVL), and 368–388 (LLKVSMIPGLFLILSGMLFTI).

Belongs to the SecY/SEC61-alpha family. SecY2 subfamily. Component of the accessory SecA2/SecY2 protein translocase complex required to export cell wall proteins. May form heterotrimers with SecE and SecG subunits.

It localises to the cell membrane. Its function is as follows. Part of the accessory SecA2/SecY2 system specifically required for export of possible cell wall proteins. The central subunit of a protein translocation channel. This chain is Accessory Sec system protein translocase subunit SecY2, found in Streptococcus oralis (strain Uo5).